A 334-amino-acid chain; its full sequence is GTPase Obg (334 aa).

The region spanning methionine 1 to leucine 159 is the Obg domain. The OBG-type G domain occupies alanine 160–glutamine 331. GTP contacts are provided by residues glycine 166–serine 173, phenylalanine 191–tyrosine 195, aspartate 212–glycine 215, asparagine 282–aspartate 285, and serine 312–alanine 314. Mg(2+) contacts are provided by serine 173 and threonine 193.

It belongs to the TRAFAC class OBG-HflX-like GTPase superfamily. OBG GTPase family. Monomer. Mg(2+) serves as cofactor.

Its subcellular location is the cytoplasm. In terms of biological role, an essential GTPase which binds GTP, GDP and possibly (p)ppGpp with moderate affinity, with high nucleotide exchange rates and a fairly low GTP hydrolysis rate. Plays a role in control of the cell cycle, stress response, ribosome biogenesis and in those bacteria that undergo differentiation, in morphogenesis control. In Francisella tularensis subsp. tularensis (strain WY96-3418), this protein is GTPase Obg.